The sequence spans 851 residues: Protein NUD1 (851 aa).

Disordered regions lie at residues 1 to 31 (MDMD…NAHS) and 216 to 352 (LVGS…KAPS). Polar residues predominate over residues 8–21 (AELSSQLENLTINS). Composition is skewed to low complexity over residues 223-246 (NSNN…INNK) and 260-278 (SNSF…QTQS). Positions 291 to 304 (NTISPGQLGYQFNH) are enriched in polar residues. A compositionally biased stretch (low complexity) spans 320–333 (SSSHSLDNTSSNQS). Lys-357 participates in a covalent cross-link: Glycyl lysine isopeptide (Lys-Gly) (interchain with G-Cter in ubiquitin). Residues Thr-388 and Thr-392 each carry the phosphothreonine modification. Phosphoserine is present on residues Ser-417 and Ser-419. LRR repeat units follow at residues 544–566 (DLEC…SLCH), 567–588 (HLQE…GSSR), 589–609 (MKKL…EQLI), 621–642 (TVEV…NCLP), and 643–664 (RLKV…SKME).

As to quaternary structure, interacts directly with MPC54, CNM67, SPO21/MPC70, ADY3 and ADY4. Probable component of a spindle pole boby (SPB) complex composed of ADY3, SSP1, DON1, MPC54, SPO21/MPC70, NUD1 and CNM67. Phosphorylated from S/G2 phase until the end of mitosis.

It localises to the cytoplasm. Its subcellular location is the cytoskeleton. The protein localises to the microtubule organizing center. The protein resides in the spindle pole body. It is found in the nucleus envelope. Functionally, involved in astral microtubule organization by binding SCP72 to the outer plaque in a cell-cycle dependent manner. Required for the mitotic exit by facilitating the binding of TEMP1 to CDC15. Also involved in the pathway that organizes the shaping and sizing of the prospore membrane (PSM) during sporulation. This Saccharomyces cerevisiae (strain ATCC 204508 / S288c) (Baker's yeast) protein is Protein NUD1 (NUD1).